The following is a 374-amino-acid chain: Glycerophosphodiester phosphodiesterase GDPD2 (374 aa).

One can recognise a GP-PDE domain in the interval 38 to 326; it reads FSVIGHRGIG…DFVEEIIEST (289 aa). The disordered stretch occupies residues 330 to 349; the sequence is MIRPPPSSSPLPSPSKDDDV. Residues 332–342 show a composition bias toward pro residues; that stretch reads RPPPSSSPLPS.

Belongs to the glycerophosphoryl diester phosphodiesterase family. Expressed in roots, shoots, flowers and siliques.

It carries out the reaction a sn-glycero-3-phosphodiester + H2O = an alcohol + sn-glycerol 3-phosphate + H(+). The protein is Glycerophosphodiester phosphodiesterase GDPD2 of Arabidopsis thaliana (Mouse-ear cress).